Reading from the N-terminus, the 487-residue chain is MGVIGIQLVVTMVMASVMQKIIPHYSLARWLLCNGSLRWYQHPTEEELRILAGKQQKGKTKKDRKYNGHIESKPLTIPKDIDLHLETKSVTEVDTLALHYFPEYQWLVDFTVAATVVYLVTEVYYNFMKPTQEMNISLVWCLLVLSFAIKVLFSLTTHYFKVEDGGERSVCVTFGFFFFVKAMAVLIVTENYLEFGLETGFTNFSDSAMQFLEKQGLESQSPVSKLTFKFFLAIFCSFIGAFLTFPGLRLAQMHLDALNLATEKITQTLLHINFLAPLFMVLLWVKPITKDYIMNPPLGKESIPLMTEATFDTLRLWLIILLCALRLAMMRSHLQAYLNLAQKCVDQMKKEAGRISTVELQKMVARVFYYLCVIALQYVAPLVMLLHTTLLLKTLGNHSWGIYPESISTLPVDNSLLSNSVYSELPSAEGKMKVTVTQITVALSSLKNIFTPLLFRGLLSFLTWWIAACLFSTSLFGLFYHQYLTVA.

N34 is a glycosylation site (N-linked (GlcNAc...) asparagine). Residues 107-127 (LVDFTVAATVVYLVTEVYYNF) form a helical membrane-spanning segment. N-linked (GlcNAc...) asparagine glycosylation occurs at N135. Helical transmembrane passes span 136–156 (ISLV…FSLT) and 169–189 (SVCV…LIVT). A glycan (N-linked (GlcNAc...) asparagine) is linked at N203. The next 5 helical transmembrane spans lie at 228-248 (FKFF…FPGL), 265-285 (ITQT…LLWV), 305-325 (LMTE…LCAL), 367-387 (VFYY…MLLH), and 459-479 (LSFL…FGLF).

This sequence belongs to the TMEM161 family.

The protein localises to the cell membrane. In terms of biological role, essential for maintaining normal cardiac rhythm in the developing heart and for neonatal survival. Inhibits potassium and calcium currents in the cardiomyocytes, this assists in timely action potential repolarization and thereby maintains normal cardiac rhythm. The sequence is that of Transmembrane protein 161B (TMEM161B) from Homo sapiens (Human).